The chain runs to 245 residues: Thymidylate kinase (245 aa).

55-62 is an ATP binding site; it reads GIDGVGKS.

This sequence belongs to the thymidylate kinase family.

The enzyme catalyses dTMP + ATP = dTDP + ADP. Functionally, phosphorylation of dTMP to form dTDP in both de novo and salvage pathways of dTTP synthesis. This chain is Thymidylate kinase, found in Rhodopirellula baltica (strain DSM 10527 / NCIMB 13988 / SH1).